The chain runs to 245 residues: Adenylate kinase (245 aa).

15-20 (GSGKGT) serves as a coordination point for ATP. The NMP stretch occupies residues 35-64 (SSGDLLRGAVSKDTPLSQEIKSYLDQGKLL). Residues Ser-36, Arg-41, 62–64 (KLL), 103–106 (GFPR), and Gln-110 contribute to the AMP site. The interval 143–176 (SRYICPACQGIYNEQQGFSSCPKCSVELIRRSDD) is LID. Arg-144 provides a ligand contact to ATP. Residues Cys-147 and Cys-150 each coordinate Zn(2+). 153-154 (IY) is an ATP binding site. Zn(2+) is bound by residues Cys-163 and Cys-166. Positions 173 and 184 each coordinate AMP. Residue Ala-212 participates in ATP binding.

This sequence belongs to the adenylate kinase family. As to quaternary structure, monomer.

Its subcellular location is the cytoplasm. It catalyses the reaction AMP + ATP = 2 ADP. Its pathway is purine metabolism; AMP biosynthesis via salvage pathway; AMP from ADP: step 1/1. In terms of biological role, catalyzes the reversible transfer of the terminal phosphate group between ATP and AMP. Plays an important role in cellular energy homeostasis and in adenine nucleotide metabolism. The polypeptide is Adenylate kinase (Chlamydia trachomatis serovar L2 (strain ATCC VR-902B / DSM 19102 / 434/Bu)).